Here is a 394-residue protein sequence, read N- to C-terminus: Elongation factor Tu (394 aa).

Positions 10–204 (KPHVNVGTIG…ALDTYIPEPE (195 aa)) constitute a tr-type G domain. The tract at residues 19–26 (GHVDHGKT) is G1. 19-26 (GHVDHGKT) contacts GTP. Thr26 contributes to the Mg(2+) binding site. The segment at 60 to 64 (GITIN) is G2. Positions 81-84 (DCPG) are G3. GTP is bound by residues 81-85 (DCPGH) and 136-139 (NKCD). Positions 136–139 (NKCD) are G4. The tract at residues 174–176 (SAL) is G5.

This sequence belongs to the TRAFAC class translation factor GTPase superfamily. Classic translation factor GTPase family. EF-Tu/EF-1A subfamily. As to quaternary structure, monomer.

Its subcellular location is the cytoplasm. It catalyses the reaction GTP + H2O = GDP + phosphate + H(+). GTP hydrolase that promotes the GTP-dependent binding of aminoacyl-tRNA to the A-site of ribosomes during protein biosynthesis. This Shewanella halifaxensis (strain HAW-EB4) protein is Elongation factor Tu.